The chain runs to 215 residues: MADS-box transcription factor 4 (215 aa).

Positions 1 to 61 constitute an MADS-box domain; sequence MGRGKIEIKR…GKLSDYCTPK (61 aa). Residues 89–175 form the K-box domain; it reads HKSLSAEIDR…AFRVHQQEVE (87 aa).

As to quaternary structure, may interact with the K-box of MADS16. As to expression, highly expressed in lodicules, at intermediate levels in stamens, and weakly in carpels. Expressed in pollen.

Its subcellular location is the nucleus. Functionally, probable transcription factor involved in the development of floral organs. B-class protein required for normal development of lodicules and stamens (whorls 2 and 3). May function as a heterodimer with MADS16. The chain is MADS-box transcription factor 4 (MADS4) from Oryza sativa subsp. japonica (Rice).